A 762-amino-acid chain; its full sequence is uncharacterized protein (762 aa).

In terms of domain architecture, MCM spans 334-542; the sequence is IIDILSNYLI…SDEEIAEHIL (209 aa). Residue 384-391 participates in ATP binding; it reads TDPGIGKS.

It belongs to the MCM family.

This is an uncharacterized protein from Methanocaldococcus jannaschii (strain ATCC 43067 / DSM 2661 / JAL-1 / JCM 10045 / NBRC 100440) (Methanococcus jannaschii).